The sequence spans 102 residues: Small ribosomal subunit protein uS10 (102 aa).

It belongs to the universal ribosomal protein uS10 family. As to quaternary structure, part of the 30S ribosomal subunit.

In terms of biological role, involved in the binding of tRNA to the ribosomes. This is Small ribosomal subunit protein uS10 from Myxococcus xanthus (strain DK1622).